A 364-amino-acid chain; its full sequence is DNA replication and repair protein RecF (364 aa).

ATP is bound at residue Gly30–Thr37.

Belongs to the RecF family.

The protein localises to the cytoplasm. In terms of biological role, the RecF protein is involved in DNA metabolism; it is required for DNA replication and normal SOS inducibility. RecF binds preferentially to single-stranded, linear DNA. It also seems to bind ATP. This Streptococcus suis (strain 98HAH33) protein is DNA replication and repair protein RecF.